Here is a 154-residue protein sequence, read N- to C-terminus: Hexachlorocyclohexane dehydrochlorinase 1 (154 aa).

D25 is an active-site residue. H73 functions as the Proton acceptor in the catalytic mechanism.

Belongs to the HCH dehydrochlorinase family. As to quaternary structure, homotrimer.

The protein resides in the periplasm. It catalyses the reaction gamma-hexachlorocyclohexane = (3R,4S,5S,6R)-pentachlorocyclohexene + chloride + H(+). The enzyme catalyses (3R,4S,5S,6R)-pentachlorocyclohexene = (3R,6R)-1,3,4,6-tetrachlorocyclohexa-1,4-diene + chloride + H(+). It functions in the pathway xenobiotic degradation; hexachlorocyclohexane degradation. Functionally, catalyzes the conversion of the important environmental pollutant gamma-hexachlorocyclohexane (gamma-HCH or lindane) to 1,3,4,6-tetrachloro-1,4-cyclohexadiene (1,4-TCDN) via gamma-pentachlorocyclohexene (gamma-PCCH). Proceeds by two successive 1,2-anti conformationally dependent dehydrochlorinations. Also shows activity with alpha- and delta-HCH, giving alpha- and delta-PCCH respectively, but not with the beta isomer. In Sphingobium indicum (strain DSM 16412 / CCM 7286 / MTCC 6364 / B90A), this protein is Hexachlorocyclohexane dehydrochlorinase 1.